Here is a 428-residue protein sequence, read N- to C-terminus: Histidine--tRNA ligase (428 aa).

Belongs to the class-II aminoacyl-tRNA synthetase family. As to quaternary structure, homodimer.

Its subcellular location is the cytoplasm. The enzyme catalyses tRNA(His) + L-histidine + ATP = L-histidyl-tRNA(His) + AMP + diphosphate + H(+). The chain is Histidine--tRNA ligase from Bordetella avium (strain 197N).